Here is a 259-residue protein sequence, read N- to C-terminus: Phosphatidylglycerol--prolipoprotein diacylglyceryl transferase (259 aa).

4 helical membrane-spanning segments follow: residues leucine 12 to alanine 32, isoleucine 46 to valine 66, isoleucine 83 to valine 103, and valine 109 to isoleucine 129. Arginine 131 is a binding site for a 1,2-diacyl-sn-glycero-3-phospho-(1'-sn-glycerol). A run of 3 helical transmembrane segments spans residues valine 167–tryptophan 187, leucine 194–isoleucine 214, and glycine 226–phenylalanine 246.

The protein belongs to the Lgt family.

Its subcellular location is the cell membrane. It carries out the reaction L-cysteinyl-[prolipoprotein] + a 1,2-diacyl-sn-glycero-3-phospho-(1'-sn-glycerol) = an S-1,2-diacyl-sn-glyceryl-L-cysteinyl-[prolipoprotein] + sn-glycerol 1-phosphate + H(+). Its pathway is protein modification; lipoprotein biosynthesis (diacylglyceryl transfer). Its function is as follows. Catalyzes the transfer of the diacylglyceryl group from phosphatidylglycerol to the sulfhydryl group of the N-terminal cysteine of a prolipoprotein, the first step in the formation of mature lipoproteins. The polypeptide is Phosphatidylglycerol--prolipoprotein diacylglyceryl transferase (Streptococcus equi subsp. zooepidemicus (strain H70)).